Reading from the N-terminus, the 1175-residue chain is Potassium/sodium hyperpolarization-activated cyclic nucleotide-gated channel 4 (1175 aa).

Residues 1–259 (MDKLPPSMRK…SAGFWIIHPY (259 aa)) are Cytoplasmic-facing. Residues 17–186 (QQVGAKAWIM…SSCGEQRPAD (170 aa)) form a disordered region. A compositionally biased stretch (acidic residues) spans 26-36 (MDEEEDAEEEG). The segment covering 60–75 (PSAAAAAAGGAESRGA) has biased composition (low complexity). The segment covering 111–126 (SRGGGGGGGSTGGGSH) has biased composition (gly residues). Positions 128–140 (HLHDSAEERRLIA) are enriched in basic and acidic residues. A Phosphoserine modification is found at S145. Positions 162–175 (PGAPAPPAASPPQV) are enriched in pro residues. A helical membrane pass occupies residues 260–288 (SDFRFYWDLTMLLLMVGNLIIIPVGITFF). Topologically, residues 289-292 (KDEN) are extracellular. The chain crosses the membrane as a helical span at residues 293–316 (TTPWIVFNVVSDTFFLIDLVLNFR). The Cytoplasmic segment spans residues 317–329 (TGIVVEDNTDIIL). The chain crosses the membrane as a helical span at residues 330–352 (DPRRIKMKYLKSWFVVDFVSSIP). At 353 to 374 (VDYIFLIVETRIDSEVYKTARA) the chain is on the extracellular side. Residues 375 to 410 (LRIVRFTKILSLLRLLRLSRLIRYIHQWEEIFHMTY) traverse the membrane as a helical; Voltage-sensor segment. Topologically, residues 411–413 (DLA) are cytoplasmic. A helical transmembrane segment spans residues 414–444 (SAVVRIVNLIGMMLLLCHWDGCLQFLVPMLQ). The Extracellular segment spans residues 445–449 (DFPDD). Positions 450–478 (CWVSLNNMVNNSWGKQYSYALFKAMSHML) form an intramembrane region, pore-forming. At 479 to 488 (CIGYGRQAPM) the chain is on the extracellular side. Residues 489–521 (GMSDVWLTMLSMIVGATCYAMFIGHATALIQSL) form a helical membrane-spanning segment. Residues 522 to 1175 (DSSRRQYQEK…PVRSKLPSNL (654 aa)) lie on the Cytoplasmic side of the membrane. 3',5'-cyclic GMP-binding residues include Y560, K563, F565, and E567. G660, E661, C663, R670, T671, V674, and R711 together coordinate 3',5'-cyclic AMP. 2 disordered regions span residues 801 to 820 (AIFR…AGQT) and 830 to 1175 (LAPS…PSNL). 4 stretches are compositionally biased toward low complexity: residues 839 to 854 (SPAS…SSAS), 900 to 912 (LGGS…SPLL), 948 to 966 (SPTS…LSPG), and 984 to 1004 (RLPF…SPRG). The segment covering 1038 to 1050 (ASSPPPPPPPPAP) has biased composition (pro residues). Phosphoserine is present on residues S1089 and S1093. Positions 1102 to 1114 (PPFPRAPGRPPGA) are enriched in pro residues.

This sequence belongs to the potassium channel HCN family. In terms of assembly, homotetramer. The channel is composed of a homo- or heterotetrameric complex of pore-forming subunits. Interacts with PEX5L with a 4:4 HCN4:PEX5L stoichiometry; reduces the effects of cAMP on the voltage-dependence and rate of activation. Interacts with IRAG1; regulates HCN4 channel activity. Interacts with IRAG2; regulates HCN4 channel activity. In terms of processing, S-palmitoylated. In terms of tissue distribution, highly expressed in the heart sinoatrial node (SAN). Not detected in atrium, ventricle, forebrain or cerebellum. Detected at very low levels in total brain.

It localises to the cell membrane. The enzyme catalyses K(+)(in) = K(+)(out). It carries out the reaction Na(+)(in) = Na(+)(out). Activated by cAMP and to a lesser extent by cGMP and cCMP. cAMP binding causes a conformation change that leads to the assembly of an active tetramer and channel opening by shifting the voltage-dependency towards more positive voltages. Binding of cAMP removes a tonic inhibition conferred by cyclic nucleotide-binding domain (CNBD) on channel opening. Cyclic dinucleotides can modulate HCN4 channel; cyclic dinucleotides acting as potent antagonists of cAMP. Inhibited by extracellular Cs(+) ions. Auxiliary subunits can also regulate HCN4 channel. IRAG1 causes a gain-of-function by shifting HCN4 activation to more depolarized membrane potentials in the absence of cAMP. In contrast, IRAG2 causes a loss-of-function by inhibiting cAMP-dependent potentiation of HCN4 activation. Hyperpolarization-activated ion channel that are permeable to Na(+) and K(+) ions with very slow activation and inactivation. Exhibits higher selectivity for K(+) over Na(+) ions. Contributes to the native pacemaker currents in heart (If) that regulate the rhythm of heart beat. Contributes to the native pacemaker currents in neurons (Ih). May mediate responses to sour stimuli. The protein is Potassium/sodium hyperpolarization-activated cyclic nucleotide-gated channel 4 (HCN4) of Oryctolagus cuniculus (Rabbit).